We begin with the raw amino-acid sequence, 302 residues long: Endochitinase 2 (302 aa).

Residues 1-42 (EQCGRQAGGALCPGGLCCSQFGWCGSTADYCTVPGCQSQCSG) enclose the Chitin-binding type-1 domain. 7 cysteine pairs are disulfide-bonded: cysteine 3–cysteine 18, cysteine 12–cysteine 24, cysteine 17–cysteine 31, cysteine 36–cysteine 40, cysteine 73–cysteine 136, cysteine 148–cysteine 156, and cysteine 255–cysteine 287. The Proton donor role is filled by glutamate 117. Residues 296 to 302 (GVSVDSM) constitute a propeptide, removed in mature form.

It belongs to the glycosyl hydrolase 19 family. Chitinase class I subfamily.

It carries out the reaction Random endo-hydrolysis of N-acetyl-beta-D-glucosaminide (1-&gt;4)-beta-linkages in chitin and chitodextrins.. Functionally, defense against chitin-containing fungal pathogens. This chain is Endochitinase 2, found in Gossypium hirsutum (Upland cotton).